The chain runs to 259 residues: Type III pantothenate kinase (259 aa).

6–13 (DVGNTNCT) lines the ATP pocket. 107–110 (GSDR) is a binding site for substrate. The active-site Proton acceptor is Asp109. Asp129 contributes to the K(+) binding site. Thr132 is an ATP binding site. Thr184 is a binding site for substrate.

This sequence belongs to the type III pantothenate kinase family. As to quaternary structure, homodimer. It depends on NH4(+) as a cofactor. K(+) serves as cofactor.

The protein localises to the cytoplasm. The enzyme catalyses (R)-pantothenate + ATP = (R)-4'-phosphopantothenate + ADP + H(+). It participates in cofactor biosynthesis; coenzyme A biosynthesis; CoA from (R)-pantothenate: step 1/5. Functionally, catalyzes the phosphorylation of pantothenate (Pan), the first step in CoA biosynthesis. This chain is Type III pantothenate kinase, found in Listeria monocytogenes serovar 1/2a (strain ATCC BAA-679 / EGD-e).